A 156-amino-acid chain; its full sequence is ATP synthase subunit b', chloroplastic (156 aa).

The chain crosses the membrane as a helical span at residues 24-44 (ATLPLVAIQFILLMVTLNIIL).

Belongs to the ATPase B chain family. In terms of assembly, F-type ATPases have 2 components, F(1) - the catalytic core - and F(0) - the membrane proton channel. F(1) has five subunits: alpha(3), beta(3), gamma(1), delta(1), epsilon(1). F(0) has four main subunits: a(1), b(1), b'(1) and c(10-14). The alpha and beta chains form an alternating ring which encloses part of the gamma chain. F(1) is attached to F(0) by a central stalk formed by the gamma and epsilon chains, while a peripheral stalk is formed by the delta, b and b' chains.

The protein localises to the plastid. It localises to the chloroplast thylakoid membrane. F(1)F(0) ATP synthase produces ATP from ADP in the presence of a proton or sodium gradient. F-type ATPases consist of two structural domains, F(1) containing the extramembraneous catalytic core and F(0) containing the membrane proton channel, linked together by a central stalk and a peripheral stalk. During catalysis, ATP synthesis in the catalytic domain of F(1) is coupled via a rotary mechanism of the central stalk subunits to proton translocation. Its function is as follows. Component of the F(0) channel, it forms part of the peripheral stalk, linking F(1) to F(0). The b'-subunit is a diverged and duplicated form of b found in plants and photosynthetic bacteria. This chain is ATP synthase subunit b', chloroplastic, found in Thalassiosira pseudonana (Marine diatom).